Here is a 416-residue protein sequence, read N- to C-terminus: MKLSELAPRERHNFIYFMLFFFFYYFIMSAYFPFFPVWLAEVNHLTKTETGIVFSCISLFAIIFQPVFGLISDKLGLRKHLLWTITILLILFAPFFIFVFSPLLQMNIMAGALVGGVYLGIVFSSRSGAVEAYIERVSRANRFEYGKVRVSGCVGWALCASITGILFSIDPNITFWIASGFALILGVLLWVSKPESSNSAEVIDALGANRQAFSMRTAAELFRMPRFWGFIIYVVGVASVYDVFDQQFANFFKGFFSSPQRGTEVFGFVTTGGELLNALIMFCAPAIINRIGAKNALLIAGLIMSVRILGSSFATSAVEVIILKMLHMFEIPFLLVGTFKYISSAFKGKLSATLFLIGFNLSKQLSSVVLSAWVGRMYDTVGFHQAYLILGCITLSFTVISLFTLKGSKTLLPATA.

The Cytoplasmic portion of the chain corresponds to 1–13 (MKLSELAPRERHN). A helical transmembrane segment spans residues 14 to 34 (FIYFMLFFFFYYFIMSAYFPF). The Periplasmic segment spans residues 35 to 50 (FPVWLAEVNHLTKTET). The helical transmembrane segment at 51-71 (GIVFSCISLFAIIFQPVFGLI) threads the bilayer. Residues 72 to 80 (SDKLGLRKH) lie on the Cytoplasmic side of the membrane. A helical transmembrane segment spans residues 81 to 101 (LLWTITILLILFAPFFIFVFS). P102 is a topological domain (periplasmic). Residues 103-123 (LLQMNIMAGALVGGVYLGIVF) traverse the membrane as a helical segment. The Cytoplasmic portion of the chain corresponds to 124–149 (SSRSGAVEAYIERVSRANRFEYGKVR). 2 helical membrane-spanning segments follow: residues 150–170 (VSGC…FSID) and 171–191 (PNIT…LLWV). The Cytoplasmic segment spans residues 192 to 223 (SKPESSNSAEVIDALGANRQAFSMRTAAELFR). A helical transmembrane segment spans residues 224–244 (MPRFWGFIIYVVGVASVYDVF). The Periplasmic segment spans residues 245–267 (DQQFANFFKGFFSSPQRGTEVFG). A helical membrane pass occupies residues 268–288 (FVTTGGELLNALIMFCAPAII). Topologically, residues 289–295 (NRIGAKN) are cytoplasmic. The next 2 helical transmembrane spans lie at 296–316 (ALLI…FATS) and 317–337 (AVEV…LLVG). Topologically, residues 338–353 (TFKYISSAFKGKLSAT) are cytoplasmic. Residues 354–374 (LFLIGFNLSKQLSSVVLSAWV) traverse the membrane as a helical segment. Over 375 to 384 (GRMYDTVGFH) the chain is Periplasmic. A helical membrane pass occupies residues 385–405 (QAYLILGCITLSFTVISLFTL). The Cytoplasmic segment spans residues 406 to 416 (KGSKTLLPATA).

It belongs to the major facilitator superfamily. Oligosaccharide:H(+) symporter (OHS) (TC 2.A.1.5) family.

The protein resides in the cell inner membrane. The catalysed reaction is lactose(in) + H(+)(in) = lactose(out) + H(+)(out). Responsible for transport of beta-galactosides into the cell, with the concomitant import of a proton (symport system). This chain is Lactose permease (lacY), found in Klebsiella oxytoca.